Here is a 447-residue protein sequence, read N- to C-terminus: Cobyrinate a,c-diamide synthase (447 aa).

Positions 247–435 constitute a GATase cobBQ-type domain; that stretch reads RIGVAIDEAF…IHIHAASCPQ (189 aa). Cys-329 functions as the Nucleophile in the catalytic mechanism.

The protein belongs to the CobB/CbiA family. Mg(2+) serves as cofactor.

It carries out the reaction cob(II)yrinate + 2 L-glutamine + 2 ATP + 2 H2O = cob(II)yrinate a,c diamide + 2 L-glutamate + 2 ADP + 2 phosphate + 2 H(+). The enzyme catalyses Ni-sirohydrochlorin + 2 L-glutamine + 2 ATP + 2 H2O = Ni-sirohydrochlorin a,c-diamide + 2 L-glutamate + 2 ADP + 2 phosphate + 2 H(+). It functions in the pathway cofactor biosynthesis; adenosylcobalamin biosynthesis; cob(II)yrinate a,c-diamide from sirohydrochlorin (anaerobic route): step 10/10. Catalyzes the ATP-dependent amidation of the two carboxylate groups at positions a and c of cobyrinate, using either L-glutamine or ammonia as the nitrogen source. Involved in the biosynthesis of the unique nickel-containing tetrapyrrole coenzyme F430, the prosthetic group of methyl-coenzyme M reductase (MCR), which plays a key role in methanogenesis and anaerobic methane oxidation. Catalyzes the ATP-dependent amidation of the two carboxylate groups at positions a and c of Ni-sirohydrochlorin, using L-glutamine or ammonia as the nitrogen source. The protein is Cobyrinate a,c-diamide synthase of Methanothermobacter thermautotrophicus (strain ATCC 29096 / DSM 1053 / JCM 10044 / NBRC 100330 / Delta H) (Methanobacterium thermoautotrophicum).